The chain runs to 249 residues: Ubiquinone biosynthesis protein COQ4 homolog, mitochondrial (249 aa).

Residues His134, Asp135, His138, and Glu150 each coordinate Zn(2+).

The protein belongs to the COQ4 family. In terms of assembly, component of a multi-subunit COQ enzyme complex. Requires Zn(2+) as cofactor.

Its subcellular location is the mitochondrion inner membrane. The catalysed reaction is a 4-hydroxy-3-methoxy-5-(all-trans-polyprenyl)benzoate + H(+) = a 2-methoxy-6-(all-trans-polyprenyl)phenol + CO2. It functions in the pathway cofactor biosynthesis; ubiquinone biosynthesis. In terms of biological role, lyase that catalyzes the C1-decarboxylation of 4-hydroxy-3-methoxy-5-(all-trans-polyprenyl)benzoic acid into 2-methoxy-6-(all-trans-polyprenyl)phenol during ubiquinone biosynthesis. This Trypanosoma brucei brucei (strain 927/4 GUTat10.1) protein is Ubiquinone biosynthesis protein COQ4 homolog, mitochondrial.